A 250-amino-acid chain; its full sequence is Triosephosphate isomerase (250 aa).

9 to 11 (NWK) is a substrate binding site. Catalysis depends on His94, which acts as the Electrophile. The active-site Proton acceptor is Glu166. Substrate contacts are provided by residues Gly172, Ser211, and 232–233 (GG).

It belongs to the triosephosphate isomerase family. In terms of assembly, homodimer.

The protein resides in the cytoplasm. The catalysed reaction is D-glyceraldehyde 3-phosphate = dihydroxyacetone phosphate. The protein operates within carbohydrate biosynthesis; gluconeogenesis. It functions in the pathway carbohydrate degradation; glycolysis; D-glyceraldehyde 3-phosphate from glycerone phosphate: step 1/1. Functionally, involved in the gluconeogenesis. Catalyzes stereospecifically the conversion of dihydroxyacetone phosphate (DHAP) to D-glyceraldehyde-3-phosphate (G3P). This Methylococcus capsulatus (strain ATCC 33009 / NCIMB 11132 / Bath) protein is Triosephosphate isomerase.